A 319-amino-acid chain; its full sequence is 1-aminocyclopropane-1-carboxylate oxidase (319 aa).

Positions 153–253 (PTFGTKVSNY…RMSIASFYNP (101 aa)) constitute a Fe2OG dioxygenase domain. The Fe cation site is built by histidine 177, aspartate 179, and histidine 234.

This sequence belongs to the iron/ascorbate-dependent oxidoreductase family. It depends on Fe cation as a cofactor.

The enzyme catalyses 1-aminocyclopropane-1-carboxylate + L-ascorbate + O2 = ethene + L-dehydroascorbate + hydrogen cyanide + CO2 + 2 H2O. The protein operates within alkene biosynthesis; ethylene biosynthesis via S-adenosyl-L-methionine; ethylene from S-adenosyl-L-methionine: step 2/2. This Prunus mume (Japanese apricot) protein is 1-aminocyclopropane-1-carboxylate oxidase (ACO1).